A 420-amino-acid chain; its full sequence is Gamma-glutamyl phosphate reductase (420 aa).

The protein belongs to the gamma-glutamyl phosphate reductase family.

It localises to the cytoplasm. It catalyses the reaction L-glutamate 5-semialdehyde + phosphate + NADP(+) = L-glutamyl 5-phosphate + NADPH + H(+). It functions in the pathway amino-acid biosynthesis; L-proline biosynthesis; L-glutamate 5-semialdehyde from L-glutamate: step 2/2. In terms of biological role, catalyzes the NADPH-dependent reduction of L-glutamate 5-phosphate into L-glutamate 5-semialdehyde and phosphate. The product spontaneously undergoes cyclization to form 1-pyrroline-5-carboxylate. This is Gamma-glutamyl phosphate reductase from Streptococcus pneumoniae serotype 19F (strain G54).